Reading from the N-terminus, the 822-residue chain is MARGKRSTQRDADLELESLQSEIESESPQPVTKSKAKKNKKKLNKASAFNSDNDSNYDLKPEDDEVDEEVVPVKKKPSKKSKKAKANAFEAFADEQSVEEEEEEDSEKPVRKNKKSSKKASPKNAFDALADDMDDLSLDEEESESSEKSKKKKKKSKSKDDGSEALDDGDIESSEKDKKKKKKSKENDDAPKKDRKTRKKEEKARKLASMLESENKDNDANAAPLNKTDAFKDGLPSGRLIFAYASGQKVAPDGSNPADGITVTGNLLSPPNSRDLQVEKLSVSAWGKLLIKDSELNLINGRRYGLIAPNGSGKSTLLHAIACGLIPTPSSLDFYLLDREYIPNELTCVEAVLDINEQERKHLEAMMEDLLDDPDKNAVELDTIQTRLTDLETENSDHRVYKILRGLQFTDEMIAKRTNELSGGWRMRIALARILFIKPTLMMLDEPTNHLDLEAVAWLEEYLTHEMEGHTLLITCHTQDTLNEVCTDIIHLYHQKLDYYSGNYDTFLKVRAERDVQLAKKARQQEKDMAKLQNKLNMTGSEQQKKAKAKVKAMNKKLEKDKQSGKVLDEEIIQEKQLVIRFEDCGGGIPSPAIKFQDVSFNYPGGPTIFSKLNFGLDLKSRVALVGPNGAGKTTLIKLILEKVQPSTGSVVRHHGLRLALFNQHMGDQLDMRLSAVEWLRTKFGNKPEGEMRRIVGRYGLTGKSQVIPMGQLSDGQRRRVLFAFLGMTQPHILLLDEPTNALDIDTIDALADALNNFDGGVVFITHDFRLIDQVAEEIWIVQNGTVKEFDGEIRDYKMMLKQQIAKEREEERRIELEKQKK.

Positions 1–230 are disordered; the sequence is MARGKRSTQR…NAAPLNKTDA (230 aa). Serine 27 carries the phosphoserine modification. Over residues 34–44 the composition is skewed to basic residues; sequence SKAKKNKKKLN. Phosphoserine is present on residues serine 47, serine 51, and serine 55. Tyrosine 57 bears the Phosphotyrosine mark. Positions 61-70 are enriched in acidic residues; that stretch reads PEDDEVDEEV. Residues 73–85 are compositionally biased toward basic residues; the sequence is VKKKPSKKSKKAK. A compositionally biased stretch (acidic residues) spans 92-106; the sequence is FADEQSVEEEEEEDS. Serine 97 is subject to Phosphoserine. The span at 111 to 121 shows a compositional bias: basic residues; it reads RKNKKSSKKAS. Acidic residues-rich tracts occupy residues 129 to 144 and 163 to 172; these read LADDMDDLSLDEEESE and SEALDDGDIE. Phosphoserine occurs at positions 137 and 163. 2 consecutive ABC transporter domains span residues 276-519 and 594-809; these read LQVE…VQLA and IKFQ…AKER. Residues 308–315 and 627–634 contribute to the ATP site; these read APNGSGKS and GPNGAGKT.

The protein belongs to the ABC transporter superfamily.

The protein resides in the cytoplasm. This is an uncharacterized protein from Schizosaccharomyces pombe (strain 972 / ATCC 24843) (Fission yeast).